The following is a 289-amino-acid chain: O-methyltransferase asqN (289 aa).

D155 serves as a coordination point for S-adenosyl-L-methionine. The active-site Proton acceptor is the H195.

This sequence belongs to the class I-like SAM-binding methyltransferase superfamily. Cation-independent O-methyltransferase family.

The protein operates within secondary metabolite biosynthesis. It functions in the pathway alkaloid biosynthesis. It participates in mycotoxin biosynthesis. O-methyltransferase; part of the gene cluster that mediates the biosynthesis of the aspoquinolone mycotoxins. The role of asqN within the aspoquinolone pathway has still to be determined. The first step of the pathway is catalyzed by the nonribosomal peptide synthetase asqK that condenses anthranilic acid and O-methyl-L-tyrosine to produce 4'-methoxycyclopeptin. 4'-methoxycyclopeptin is then converted to 4'-methoxydehydrocyclopeptin by the ketoglutarate-dependent dioxygenase asqJ. AsqJ also converts its first product 4'-methoxydehydrocyclopeptin to 4'-methoxycyclopenin. The following conversion of 4'-methoxycyclopenin into 4'-methoxyviridicatin is catalyzed by the cyclopenase asqI. 4'-methoxyviridicatin is the precursor of quinolone natural products, and is further converted to quinolinone B. The prenyltransferase asqH1 then catalyzes the canonical Friedel-Crafts alkylation of quinolinone B with dimethylallyl cation to yield dimethylallyl quinolone, which is subjected to FAD-dependent dehydrogenation by the FAD-linked oxidoreductase asqF to yield conjugated aryl diene. The delta(3') double bond then serves as the site of the second alkylation with DMAPP catalyzed by the prenyltransferase asqH2 to yield a carbenium ion intermediate, which can be attacked by H(2)O to yield a styrenyl quinolone containing a C3'-hydroxyprenyl chain. The FAD-dependent monooxygenase asqG performs epoxidation of the terminal C7'-C8' olefin. Finally, after dehydratation of the epoxide at C3 by asqC, the quinolone epoxide rearrangement protein asqO catalyzes an enzymatic 3-exo-tet cyclization to yield the cyclopropyl-THF ring system in aspoquinolone. The polypeptide is O-methyltransferase asqN (Emericella nidulans (strain FGSC A4 / ATCC 38163 / CBS 112.46 / NRRL 194 / M139) (Aspergillus nidulans)).